Reading from the N-terminus, the 240-residue chain is Small ribosomal subunit protein uS3 (240 aa).

Residues 39–109 enclose the KH type-2 domain; it reads IRQYIEKTLN…QIRVNVIEVP (71 aa). Residues 219 to 240 are disordered; that stretch reads APPSQPRRKSRRQQFDDRSQDG. The segment covering 231-240 has biased composition (basic and acidic residues); the sequence is QQFDDRSQDG.

The protein belongs to the universal ribosomal protein uS3 family. In terms of assembly, part of the 30S ribosomal subunit. Forms a tight complex with proteins S10 and S14.

Binds the lower part of the 30S subunit head. Binds mRNA in the 70S ribosome, positioning it for translation. The protein is Small ribosomal subunit protein uS3 of Synechocystis sp. (strain ATCC 27184 / PCC 6803 / Kazusa).